Reading from the N-terminus, the 445-residue chain is Glycine--tRNA ligase (445 aa).

Substrate contacts are provided by Arg97 and Glu145. ATP is bound by residues 177-179, 187-192, 262-263, and 308-311; these read RNE, FRTCEF, EV, and GLTR. A substrate-binding site is contributed by 192–196; it reads FEQME. Residue 304-308 coordinates substrate; sequence ETSAG.

The protein belongs to the class-II aminoacyl-tRNA synthetase family. As to quaternary structure, homodimer.

It is found in the cytoplasm. It catalyses the reaction tRNA(Gly) + glycine + ATP = glycyl-tRNA(Gly) + AMP + diphosphate. Catalyzes the attachment of glycine to tRNA(Gly). In Borreliella burgdorferi (strain ZS7) (Borrelia burgdorferi), this protein is Glycine--tRNA ligase.